Consider the following 772-residue polypeptide: Carnitine O-palmitoyltransferase 1, muscle isoform (772 aa).

The Cytoplasmic segment spans residues 1–47 (MAEAHQAVAFQFTVTPDGVDFRLSREALKHVYLSGINSWKKRLIRIK). Residues 48-73 (NGILRGVYPGSPTSWLVVIMATVGSS) traverse the membrane as a helical segment. At 74–102 (FCNVDISLGLVSCIQRCLPQGCGPYQTPQ) the chain is on the mitochondrial intermembrane side. Residues 103 to 122 (TRALLSMAIFSTGVWVTGIF) traverse the membrane as a helical segment. Topologically, residues 123–772 (FFRQTLKLLL…DLFQVPKAYS (650 aa)) are cytoplasmic. His473 (proton acceptor) is an active-site residue. 555–567 (GKGLIKKCRTSPD) is a CoA binding site. (R)-carnitine contacts are provided by Tyr589 and Thr602.

Belongs to the carnitine/choline acetyltransferase family. Strong expression in heart and skeletal muscle. No expression in liver and kidney.

It localises to the mitochondrion outer membrane. The catalysed reaction is (R)-carnitine + hexadecanoyl-CoA = O-hexadecanoyl-(R)-carnitine + CoA. It participates in lipid metabolism; fatty acid beta-oxidation. Functionally, catalyzes the transfer of the acyl group of long-chain fatty acid-CoA conjugates onto carnitine, an essential step for the mitochondrial uptake of long-chain fatty acids and their subsequent beta-oxidation in the mitochondrion. The sequence is that of Carnitine O-palmitoyltransferase 1, muscle isoform (CPT1B) from Homo sapiens (Human).